The following is a 1742-amino-acid chain: Complement C4 (1742 aa).

The first 19 residues, 1-19 (MRLLWGLLWAFGLFASSLQ), serve as a signal peptide directing secretion. N-linked (GlcNAc...) asparagine glycosylation is present at Asn-60. Cysteines 68 and 97 form a disulfide. The N-linked (GlcNAc...) asparagine glycan is linked to Asn-226. Cys-634 and Cys-668 are oxidised to a cystine. A propeptide spanning residues 675–678 (RKKR) is cleaved from the precursor. 3 disulfides stabilise this stretch: Cys-701/Cys-727, Cys-702/Cys-734, and Cys-715/Cys-735. The Anaphylatoxin-like domain occupies 701–735 (CCQDGLTRLPMVRSCEQRAARVLQPACREPFLSCC). Asn-861 is a glycosylation site (N-linked (GlcNAc...) asparagine). Residues 1007–1010 (CGEQ) constitute a cross-link (isoglutamyl cysteine thioester (Cys-Gln)). N-linked (GlcNAc...) asparagine glycans are attached at residues Asn-1325 and Asn-1388. Residues Tyr-1414, Tyr-1418, and Tyr-1420 each carry the sulfotyrosine modification. A propeptide spanning residues 1445-1451 (RRNRRRR) is cleaved from the precursor. 5 disulfide bridges follow: Cys-1469-Cys-1533, Cys-1581-Cys-1586, Cys-1593-Cys-1671, Cys-1616-Cys-1740, and Cys-1716-Cys-1725. The NTR domain maps to 1593 to 1740 (CPRQRRALER…FIQEYSTLGC (148 aa)).

In terms of assembly, in absence of complement activation, circulates in blood as a disulfide-linked trimer of an alpha, beta and gamma chain. Complement C4b is composed of complement C4b-A, complement C4 beta and complement C4 gamma chains that are associated via disulfide bonds. Non-enzymatic component of the C3 convertase, also named C4bC2b, composed of the serine protease complement C2b (C2), as well as complement C4b. Non-enzymatic component of the C5 convertase, also named C4bC2bC3b, composed of the serine protease complement C2b (C2), complement C3b, as well as complement C4b. Prior to secretion, the single-chain precursor is enzymatically cleaved by plasminogen (PLG) to yield non-identical chains alpha, beta and gamma. During activation of the complement systems, the alpha chain is cleaved into C4a and C4b by different proteases depending on the complement pathway: C4b stays linked to the beta and gamma chains, while C4a is released in the plasma. The alpha chain is cleaved by C1S to generate C4a and C4b following activation by the classical complement system. The alpha chain is cleaved to generate C4a and C4b by MASP2 following activation by the lectin complement system. The alpha chain is cleaved by GZMK to generate C4a and C4b following activation by the GZMK complement system. Further degradation of C4b by C1 into the inactive fragments C4c and C4d blocks the generation of C3 convertase. The proteolytic cleavages often are incomplete so that many structural forms can be found in plasma. Post-translationally, upon activation, the internal thioester bond reacts with carbohydrate antigens on the target surface to form amide or ester bonds, leading to covalent association with the surface of pathogens. In terms of processing, complement C4b interacts with complement C3b via a thioester linkage. N- and O-glycosylated. O-glycosylated with a core 1 or possibly core 8 glycan.

It is found in the secreted. It localises to the cell surface. Functionally, precursor of non-enzymatic components of the classical, lectin and GZMK complement pathways, which consist in a cascade of proteins that leads to phagocytosis and breakdown of pathogens and signaling that strengthens the adaptive immune system. Its function is as follows. Non-enzymatic component of C3 and C5 convertases. Generated following cleavage by complement proteases (C1S, MASP2 or GZMK, depending on the complement pathway), it covalently attaches to the surface of pathogens, where it acts as an opsonin that marks the surface of antigens for removal. It then recruits the serine protease complement C2b to form the C3 and C5 convertases, which cleave and activate C3 and C5, respectively, the next components of the complement pathways. Complement C4b-A isotype is responsible for effective binding to form amide bonds with immune aggregates or protein antigens, while complement C4b-B isotype catalyzes the transacylation of the thioester carbonyl group to form ester bonds with carbohydrate antigens. Putative humoral mediator released following cleavage by complement proteases (C1S, MASP2 or GZMK, depending on the complement pathway). While it is strongly similar to anaphylatoxins, its role is unclear. Was reported to act as a mediator of local inflammatory process; however these effects were probably due to contamination with C3a and/C5a anaphylatoxins in biological assays. This chain is Complement C4, found in Cavia porcellus (Guinea pig).